We begin with the raw amino-acid sequence, 1249 residues long: Protein STU1 (1249 aa).

Composition is skewed to low complexity over residues 138 to 156 and 555 to 574; these read LNSS…TATK and AASP…PSSA. Disordered stretches follow at residues 138–161, 545–619, 644–718, 755–846, 860–891, and 1084–1118; these read LNSS…KPHE, KQLE…NPVF, HVET…LGLG, AEHE…NGNI, AFQT…RPEA, and HPAP…EKRT. The segment covering 581–600 has biased composition (basic and acidic residues); that stretch reads KKMDLKAMLAERRRAVKEAG. Composition is skewed to low complexity over residues 647–667 and 708–718; these read TSSP…RIRP and SPSLSPSLGLG. Residues 755–774 are compositionally biased toward basic and acidic residues; the sequence is AEHEVDELTLKEGQKTRDDG. Polar residues-rich tracts occupy residues 809–822, 831–844, and 863–878; these read QQGN…SGRV, ATGT…SRNG, and TPLN…SSAI. The span at 1089 to 1111 shows a compositional bias: low complexity; that stretch reads SSSADNSDPMTSALSQLSLSSSK.

This sequence belongs to the CLASP family. As to quaternary structure, interacts with microtubules.

Its subcellular location is the cytoplasm. It is found in the cytoskeleton. The protein resides in the nucleus. It localises to the spindle. Its function is as follows. Microtubule binding protein that promotes the stabilization of dynamic microtubules. Required for mitotic spindle formation. The chain is Protein STU1 (STU1) from Cryptococcus neoformans var. neoformans serotype D (strain JEC21 / ATCC MYA-565) (Filobasidiella neoformans).